A 135-amino-acid polypeptide reads, in one-letter code: Transcriptional regulator HosA (135 aa).

Positions R4–N134 constitute an HTH marR-type domain. The segment at residues Q48 to N71 is a DNA-binding region (H-T-H motif).

Its function is as follows. Involved in the temperature-dependent positive control of flagellum-driven swimming motility and cellular aggregation. Regulates fliC expression by directly interacting with fliC promoter. The chain is Transcriptional regulator HosA (hosA) from Escherichia coli O111:H-.